Here is a 290-residue protein sequence, read N- to C-terminus: Glycine--tRNA ligase alpha subunit (290 aa).

This sequence belongs to the class-II aminoacyl-tRNA synthetase family. As to quaternary structure, tetramer of two alpha and two beta subunits.

It is found in the cytoplasm. The catalysed reaction is tRNA(Gly) + glycine + ATP = glycyl-tRNA(Gly) + AMP + diphosphate. The polypeptide is Glycine--tRNA ligase alpha subunit (Maridesulfovibrio salexigens (strain ATCC 14822 / DSM 2638 / NCIMB 8403 / VKM B-1763) (Desulfovibrio salexigens)).